The sequence spans 122 residues: UPF0145 protein Bmul_3577/BMULJ_04940 (122 aa).

The protein belongs to the UPF0145 family.

The protein is UPF0145 protein Bmul_3577/BMULJ_04940 of Burkholderia multivorans (strain ATCC 17616 / 249).